The primary structure comprises 320 residues: Mitochondrial thiamine pyrophosphate carrier (320 aa).

Solcar repeat units follow at residues 13-106 (NTKF…LTEL), 116-202 (REFS…LKHL), and 214-309 (NENL…FCNV). The chain crosses the membrane as a helical span at residues 19 to 39 (AVAGSVSGLVTRALISPFDVI). Residue Ser51 is modified to Phosphoserine. Helical transmembrane passes span 87 to 107 (ILSI…TELV), 122 to 142 (FVCG…VDVL), 173 to 193 (VFYK…GLQF), and 220 to 240 (LLCG…LDLF). The Substrate recognition motif lies at 241-246 (KKRLQV). A helical transmembrane segment spans residues 293–313 (ALSTGFMFFWYEFFCNVFHCM).

Belongs to the mitochondrial carrier (TC 2.A.29) family.

Its subcellular location is the mitochondrion membrane. The catalysed reaction is thiamine phosphate(out) + thiamine diphosphate(in) = thiamine phosphate(in) + thiamine diphosphate(out). Functionally, mitochondrial transporter mediating uptake of thiamine diphosphate into mitochondria. It is not clear if the antiporter activity is affected by the membrane potential or by the proton electrochemical gradient. The polypeptide is Mitochondrial thiamine pyrophosphate carrier (SLC25A19) (Pongo abelii (Sumatran orangutan)).